The following is a 257-amino-acid chain: MSYFQLEDMLRAGVHFGHLARRWSPKMKPYIFMEKNGVHIIDLQKTLVLADNALNALDAIAQTGREIMFVGTKKQAKNIIAAEAERAGMPYVCERWLGGMLTNFSTIRQSIRRMNAIDRMETDGTYDMITKKERLMLGREREKLMRILGGIATMTRIPAALFIVDIKKEHIAIKEARSLGIPIFAMVDTNCDPDLVDYVIPANDDAIRSIQLMVKAVADTIVNARALKVEQEVLAKMDEADGSEAEPEDPAAPESAE.

The segment at 237–257 (MDEADGSEAEPEDPAAPESAE) is disordered. Residues 240–257 (ADGSEAEPEDPAAPESAE) show a composition bias toward acidic residues.

This sequence belongs to the universal ribosomal protein uS2 family.

This chain is Small ribosomal subunit protein uS2, found in Chlorobium phaeovibrioides (strain DSM 265 / 1930) (Prosthecochloris vibrioformis (strain DSM 265)).